The primary structure comprises 266 residues: Methionine aminopeptidase 1 (266 aa).

A substrate-binding site is contributed by His88. Positions 106, 117, and 186 each coordinate a divalent metal cation. A substrate-binding site is contributed by His193. Residues Glu219 and Glu250 each contribute to the a divalent metal cation site.

The protein belongs to the peptidase M24A family. Methionine aminopeptidase type 1 subfamily. Monomer. Co(2+) serves as cofactor. The cofactor is Zn(2+). Mn(2+) is required as a cofactor. Requires Fe(2+) as cofactor.

It catalyses the reaction Release of N-terminal amino acids, preferentially methionine, from peptides and arylamides.. Functionally, removes the N-terminal methionine from nascent proteins. The N-terminal methionine is often cleaved when the second residue in the primary sequence is small and uncharged (Met-Ala-, Cys, Gly, Pro, Ser, Thr, or Val). Requires deformylation of the N(alpha)-formylated initiator methionine before it can be hydrolyzed. The sequence is that of Methionine aminopeptidase 1 from Mycobacterium tuberculosis (strain CDC 1551 / Oshkosh).